The following is a 421-amino-acid chain: ATP-dependent RNA helicase RhlB (421 aa).

The short motif at 9 to 37 is the Q motif element; sequence QKFSDFALHPQVVEALEKKGFYNCTPIQA. The Helicase ATP-binding domain maps to 40-219; the sequence is LPLTLAGRDV…FEQMNNAEYV (180 aa). 53 to 60 serves as a coordination point for ATP; sequence AQTGTGKT. Residues 165 to 168 carry the DEAD box motif; sequence DEAD. The 146-residue stretch at 245-390 folds into the Helicase C-terminal domain; that stretch reads RLLQTLIEEE…VSKYNPEALM (146 aa). Residues 396–421 are disordered; sequence PLRLTRSRPGNGPRRAGAPRNRRRSG. Residues 402-414 show a composition bias toward low complexity; sequence SRPGNGPRRAGAP.

It belongs to the DEAD box helicase family. RhlB subfamily. Component of the RNA degradosome, which is a multiprotein complex involved in RNA processing and mRNA degradation.

The protein resides in the cytoplasm. The catalysed reaction is ATP + H2O = ADP + phosphate + H(+). In terms of biological role, DEAD-box RNA helicase involved in RNA degradation. Has RNA-dependent ATPase activity and unwinds double-stranded RNA. This Salmonella paratyphi A (strain AKU_12601) protein is ATP-dependent RNA helicase RhlB.